The sequence spans 264 residues: Chanoclavine-I dehydrogenase easD (264 aa).

Residues methionine 1–alanine 20 form the signal peptide. The NADP(+) site is built by isoleucine 18, aspartate 66, arginine 132, tyrosine 169, lysine 173, and threonine 204. Catalysis depends on tyrosine 169, which acts as the Proton donor. Lysine 173 serves as the catalytic Lowers pKa of active site Tyr.

Belongs to the short-chain dehydrogenases/reductases (SDR) family. In terms of assembly, homotetramer.

It carries out the reaction chanoclavine-I + NAD(+) = chanoclavine-I aldehyde + NADH + H(+). It functions in the pathway alkaloid biosynthesis; ergot alkaloid biosynthesis. Its function is as follows. Chanoclavine-I dehydrogenase; part of the gene cluster that mediates the biosynthesis of fungal ergot alkaloid. DmaW catalyzes the first step of ergot alkaloid biosynthesis by condensing dimethylallyl diphosphate (DMAP) and tryptophan to form 4-dimethylallyl-L-tryptophan. The second step is catalyzed by the methyltransferase easF that methylates 4-dimethylallyl-L-tryptophan in the presence of S-adenosyl-L-methionine, resulting in the formation of 4-dimethylallyl-L-abrine. The catalase easC and the FAD-dependent oxidoreductase easE then transform 4-dimethylallyl-L-abrine to chanoclavine-I which is further oxidized by easD in the presence of NAD(+), resulting in the formation of chanoclavine-I aldehyde. Chanoclavine-I aldehyde is the precursor of ergoamides and ergopeptines in Clavicipitaceae, and clavine-type alcaloids such as fumiclavine in Trichocomaceae. However, the metabolites downstream of chanoclavine-I aldehyde in Arthrodermataceae have not been identified yet. The sequence is that of Chanoclavine-I dehydrogenase easD from Arthroderma otae (strain ATCC MYA-4605 / CBS 113480) (Microsporum canis).